The chain runs to 502 residues: MPKTEETVLQNDPSVAENGAPEPKTPGQSQKSKSFCLDDQSPDLIETVNEVSKLSISHEIVVNQDFYVEETILPPNSVEGRFAEAMYNAFWNHLKEQLLSTPPDFTCALELLKDVKETLLSLLLPWQNRLRNEIEEALDTDLLKQEAEHGALDVPHLSNYILNLMALLCAPVRDEAIQKLETIRDPVQLLRGILRVLGLMKMDMVNYTIQSFRPYLQEHSIQYEQAKFQELLDKQPSLLDYTTKWLTKAATDITTLCPSSPDSPSSSCSMVCSLPSGAGNNSEPPSPTMVLYQGYLNLLLWDLENVEFPETLLMDRIRLQELAFQLHQLTVLASVLLVARSFSGEVLFRSPEFVDRLKCTTKALTEEFISRPEETMLSVSEQVSQEVHQGLKDMGLTTLSSENTASLLGQLQNITKKENCIRSIVDQWIRFFLKCCLLHGMQESLLHFPGGLILIEKELAELGWKFLNLMHHNQQVFGPYYAEILKHIIHPAQAQETDVEPN.

The tract at residues Met1 to Cys36 is disordered.

This sequence belongs to the TCP11 family.

The sequence is that of T-complex protein 11-like X-linked protein 1 from Homo sapiens (Human).